The chain runs to 943 residues: Glutamate receptor ionotropic, NMDA 1 (943 aa).

Residues Met-1–Ala-20 form the signal peptide. The Extracellular segment spans residues Ala-21 to Gln-580. 10 N-linked (GlcNAc...) asparagine glycosylation sites follow: Asn-61, Asn-224, Asn-260, Asn-297, Asn-321, Asn-371, Asn-389, Asn-461, Asn-492, and Asn-512. An intrachain disulfide couples Cys-79 to Cys-329. Intrachain disulfides connect Cys-441-Cys-475 and Cys-457-Cys-476. 3 residues coordinate glycine: Pro-537, Thr-539, and Arg-544. A helical membrane pass occupies residues Ser-581 to Leu-601. Residues Asp-602–Thr-623 are Cytoplasmic-facing. The segment at residues Leu-624–Pro-645 is an intramembrane region (discontinuously helical). A pore-forming region spans residues Leu-624–Pro-645. Residues Arg-646–Arg-651 lie on the Cytoplasmic side of the membrane. Residues Ile-652–Tyr-668 form a helical membrane-spanning segment. Residues Thr-669 to Asn-833 are Extracellular-facing. The N-linked (GlcNAc...) asparagine glycan is linked to Asn-695. 2 residues coordinate glycine: Ser-709 and Asp-753. Residues Cys-765 and Cys-819 are joined by a disulfide bond. Asn-792 carries an N-linked (GlcNAc...) asparagine glycan. A helical transmembrane segment spans residues Met-834 to Ile-854. Over Glu-855–Val-943 the chain is Cytoplasmic. Ser-910, Ser-911, Ser-917, and Ser-918 each carry phosphoserine.

It belongs to the glutamate-gated ion channel (TC 1.A.10.1) family. NR1/GRIN1 subfamily. In terms of assembly, heterotetramer; the NMDAR subunits are modular and harbor tiered domains that function in concert to regulate opening and closing of the cation-selective ion channel pore. Forms heterotetrameric channels composed of two GluN1/zeta subunits (GRIN1), and two identical GluN2/epsilon subunits (GRIN2A, GRIN2B, GRIN2C or GRIN2D) or GluN3 subunits (GRIN3A or GRIN3B) (in vitro). Can also form heterotetrameric channels that contain at least two GluN1 subunits and at least two different GluN2 subunits (or a combination of one GluN2 and one GluN3 subunits) (in vitro). In vivo, the subunit composition may vary in function of the expression levels of the different subunits. Found in a complex with GRIN2A or GRIN2B, GRIN3A and PPP2CB. Found in a complex with GRIN2A or GRIN2B and GRIN3B. Interacts with SNX27 (via PDZ domain); the interaction is required for recycling to the plasma membrane when endocytosed and prevent degradation in lysosomes. Interacts with DLG4 and MPDZ. Interacts with LRFN1 and LRFN2. Interacts with MYZAP. Found in a complex with DLG4 and PRR7. Found in a complex with GRIN2B and PRR7. Interacts with PRR7; the interaction is reduced following NMDA receptor activity. In terms of processing, NMDA is probably regulated by C-terminal phosphorylation of an isoform of GRIN1 by PKC. Dephosphorylated on Ser-897 probably by protein phosphatase 2A (PPP2CB). Its phosphorylated state is influenced by the formation of the NMDAR-PPP2CB complex and the NMDAR channel activity.

It is found in the cell membrane. Its subcellular location is the postsynaptic cell membrane. The protein localises to the postsynaptic density membrane. It localises to the synaptic cell membrane. The enzyme catalyses Ca(2+)(in) = Ca(2+)(out). It carries out the reaction Na(+)(in) = Na(+)(out). It catalyses the reaction K(+)(in) = K(+)(out). Functionally, component of N-methyl-D-aspartate (NMDA) receptors (NMDARs) that function as heterotetrameric, ligand-gated cation channels with high calcium permeability and voltage-dependent block by Mg(2+). NMDARs participate in synaptic plasticity for learning and memory formation by contributing to the long-term potentiation (LTP). Channel activation requires binding of the neurotransmitter L-glutamate to the GluN2 subunit, glycine or D-serine binding to the GluN1 subunit, plus membrane depolarization to eliminate channel inhibition by Mg(2+). NMDARs mediate simultaneously the potasium efflux and the influx of calcium and sodium. Each GluN2 or GluN3 subunit confers differential attributes to channel properties, including activation, deactivation and desensitization kinetics, pH sensitivity, Ca2(+) permeability, and binding to allosteric modulators. The GluN3 subunits confer distinctive ion channel activation mechanism, which relies exclusively on glycine and does not involve glutamate. This is Glutamate receptor ionotropic, NMDA 1 from Canis lupus familiaris (Dog).